The sequence spans 117 residues: Large ribosomal subunit protein bL20c (117 aa).

It belongs to the bacterial ribosomal protein bL20 family.

Its subcellular location is the plastid. The protein localises to the chloroplast. Binds directly to 23S ribosomal RNA and is necessary for the in vitro assembly process of the 50S ribosomal subunit. It is not involved in the protein synthesizing functions of that subunit. This Citrus sinensis (Sweet orange) protein is Large ribosomal subunit protein bL20c.